The primary structure comprises 501 residues: Inactive cytidine monophosphate-N-acetylneuraminic acid hydroxylase (501 aa).

It belongs to the CMP-Neu5Ac hydroxylase family. As to expression, widely expressed. Highly expressed in thymus. Not expressed in brain. May be expressed in adult stem cells (at protein level).

It localises to the cytoplasm. Its function is as follows. Sialic acids are components of carbohydrate chains of glycoconjugates and are involved in cell-cell recognition and cell-pathogen interactions. That protein has no CMP-N-acetylneuraminate monooxygenase activity and is not able to convert CMP-N-acetylneuraminic acid (CMP-Neu5Ac) into its hydroxylated derivative CMP-N-glycolylneuraminic acid (CMP-Neu5Gc), a sialic acid abundantly expressed at the surface of many cells in vertebrates. However, it may play a role in Wnt signaling. This Homo sapiens (Human) protein is Inactive cytidine monophosphate-N-acetylneuraminic acid hydroxylase (CMAHP).